We begin with the raw amino-acid sequence, 311 residues long: Olfactory receptor 2Y1 (311 aa).

The Extracellular segment spans residues 1-25; that stretch reads MGSFNTSFEDGFILVGFSDWPQLEP. N5 carries N-linked (GlcNAc...) asparagine glycosylation. A helical transmembrane segment spans residues 26–49; sequence ILFVFIFIFYSLTLFGNTIIIALS. At 50–57 the chain is on the cytoplasmic side; sequence WLDLRLHT. A helical transmembrane segment spans residues 58–79; the sequence is PMYFFLSHLSLLDLCFTTSTVP. The Extracellular portion of the chain corresponds to 80–100; sequence QLLINLCGVDRTITRGGCVAQ. A disulfide bridge connects residues C97 and C188. Residues 101 to 120 form a helical membrane-spanning segment; sequence LFIYLALGSTECVLLVVMAF. The Cytoplasmic segment spans residues 121 to 139; sequence DRYAAVCRPLHYMAIMHPH. Residues 140–158 form a helical membrane-spanning segment; that stretch reads LCQTLAIASWGAGFVNSLI. Over 159 to 194 the chain is Extracellular; the sequence is QTGLAMAMPLCGHRLNHFFCEMPVFLKLACADTEGT. A helical membrane pass occupies residues 195–218; it reads EAKMFVARVIVVAVPAALILGSYV. The Cytoplasmic portion of the chain corresponds to 219 to 235; the sequence is HIAHAVLRVKSTAGRRK. A helical membrane pass occupies residues 236-258; that stretch reads AFGTCGSHLLVVFLFYGSAIYTY. Residues 259-271 are Extracellular-facing; the sequence is LQSIHNYSEREGK. N-linked (GlcNAc...) asparagine glycosylation is present at N264. Residues 272-291 traverse the membrane as a helical segment; sequence FVALFYTIITPILNPLIYTL. Residues 292–311 lie on the Cytoplasmic side of the membrane; it reads RNKDVKGALWKVLWRGRDSG.

It belongs to the G-protein coupled receptor 1 family.

The protein localises to the cell membrane. In terms of biological role, odorant receptor. This Homo sapiens (Human) protein is Olfactory receptor 2Y1 (OR2Y1).